The primary structure comprises 862 residues: Protein translocase subunit SecA (862 aa).

ATP-binding positions include Gln86, Gly104–Thr108, and Asp499. Zn(2+)-binding residues include Cys848, Cys850, Cys859, and His860.

Belongs to the SecA family. Monomer and homodimer. Part of the essential Sec protein translocation apparatus which comprises SecA, SecYEG and auxiliary proteins SecDF-YajC and YidC. It depends on Zn(2+) as a cofactor.

It is found in the cell inner membrane. The protein resides in the cytoplasm. It catalyses the reaction ATP + H2O + cellular proteinSide 1 = ADP + phosphate + cellular proteinSide 2.. Part of the Sec protein translocase complex. Interacts with the SecYEG preprotein conducting channel. Has a central role in coupling the hydrolysis of ATP to the transfer of proteins into and across the cell membrane, serving both as a receptor for the preprotein-SecB complex and as an ATP-driven molecular motor driving the stepwise translocation of polypeptide chains across the membrane. This Ehrlichia canis (strain Jake) protein is Protein translocase subunit SecA.